A 263-amino-acid chain; its full sequence is MWELRSASFWRAICAEFFASLFYVFFGLGASLRWAPGPLHVLQVALAFGLALATLVQAVGHISGAHVNPAVTFAFLVGSQMSLLRAICYMVAQLLGAVAGAAVLYSVTPPAVRGNLALNTLHPGVSVGQATIVEIFLTLQFVLCIFATYDERRNGRLGSVALAVGFSLTLGHLFGMYYTGAGMNPARSFAPAILTRNFTNHWVYWVGPVIGAGLGSLLYDFLLFPRLKSVSERLSILKGSRPSESNGQPEVTGEPVELKTQAL.

The Cytoplasmic segment spans residues 1 to 9; the sequence is MWELRSASF. The chain crosses the membrane as a helical span at residues 10–29; sequence WRAICAEFFASLFYVFFGLG. Topologically, residues 30–41 are extracellular; the sequence is ASLRWAPGPLHV. Residues 42–59 traverse the membrane as a helical segment; that stretch reads LQVALAFGLALATLVQAV. Over 60-61 the chain is Cytoplasmic; sequence GH. Positions 62-77 form an intramembrane region, discontinuously helical; that stretch reads ISGAHVNPAVTFAFLV. Residues 68-70 carry the NPA 1 motif; it reads NPA. Over 78 to 82 the chain is Cytoplasmic; that stretch reads GSQMS. The chain crosses the membrane as a helical span at residues 83 to 106; it reads LLRAICYMVAQLLGAVAGAAVLYS. The Extracellular portion of the chain corresponds to 107 to 127; sequence VTPPAVRGNLALNTLHPGVSV. The helical transmembrane segment at 128-148 threads the bilayer; the sequence is GQATIVEIFLTLQFVLCIFAT. The Cytoplasmic portion of the chain corresponds to 149–156; that stretch reads YDERRNGR. The chain crosses the membrane as a helical span at residues 157–175; that stretch reads LGSVALAVGFSLTLGHLFG. The Extracellular segment spans residues 176–178; that stretch reads MYY. The discontinuously helical intramembrane region spans 179-193; it reads TGAGMNPARSFAPAI. Positions 184–186 match the NPA 2 motif; that stretch reads NPA. Topologically, residues 194–200 are extracellular; it reads LTRNFTN. A helical transmembrane segment spans residues 201 to 222; it reads HWVYWVGPVIGAGLGSLLYDFL. Topologically, residues 223-263 are cytoplasmic; the sequence is LFPRLKSVSERLSILKGSRPSESNGQPEVTGEPVELKTQAL. The segment at 227–237 is interaction with CALM; it reads LKSVSERLSIL. Residue S235 is modified to Phosphoserine. The tract at residues 239 to 263 is disordered; that stretch reads GSRPSESNGQPEVTGEPVELKTQAL. The residue at position 243 (S243) is a Phosphoserine; by PKA. S245 bears the Phosphoserine mark. N246 carries the deamidated asparagine modification.

This sequence belongs to the MIP/aquaporin (TC 1.A.8) family. As to quaternary structure, homotetramer; each monomer provides an independent water pore. Two homotetramers on opposing membranes can dimerize, forming a cell-cell junction. Interacts with CALM; the calcium-calmodulin/CALM complex interacts with the cytoplasmic domains of two aquaporins, leading to channel closure. Interacts with BFSP1 (via C-terminus); prevents calcium-dependent inhibition of the water channel activity. Post-translationally, fatty acylated at Met-1 and Lys-238. The acyl modifications, in decreasing order of ion abundance, are: oleoyl (C18:1) &gt; palmitoyl (C16:0) &gt; stearoyl (C18:0) &gt; eicosenoyl (C20:1) &gt; dihomo-gamma-linolenoyl (C20:3) &gt; palmitoleoyl (C16:1) &gt; eicosadienoyl (C20:2). In terms of processing, subject to partial proteolytic cleavage in the eye lens core. Partial proteolysis promotes interactions between tetramers from adjoining membranes. As to expression, major component of lens fiber junctions.

Its subcellular location is the cell membrane. The protein localises to the cell junction. It carries out the reaction H2O(in) = H2O(out). Its activity is regulated as follows. The water channel activity is inhibited by calcium through calmodulin/CALM. Functionally, aquaporins form homotetrameric transmembrane channels, with each monomer independently mediating water transport across the plasma membrane along its osmotic gradient. Specifically expressed in lens fiber cells, this aquaporin is crucial for maintaining lens water homeostasis and transparency. Beyond water permeability, it also acts as a cell-to-cell adhesion molecule, forming thin junctions between lens fiber cells that are essential for maintaining the ordered structure and transparency of the lens. The protein is Lens fiber major intrinsic protein of Bos taurus (Bovine).